The following is a 434-amino-acid chain: Trigger factor (434 aa).

Positions 162–247 (GDKINISLIA…FNTVEQAKLP (86 aa)) constitute a PPIase FKBP-type domain.

Belongs to the FKBP-type PPIase family. Tig subfamily.

It localises to the cytoplasm. It carries out the reaction [protein]-peptidylproline (omega=180) = [protein]-peptidylproline (omega=0). Involved in protein export. Acts as a chaperone by maintaining the newly synthesized protein in an open conformation. Functions as a peptidyl-prolyl cis-trans isomerase. This Methylobacillus flagellatus (strain ATCC 51484 / DSM 6875 / VKM B-1610 / KT) protein is Trigger factor.